Reading from the N-terminus, the 354-residue chain is MKLQTTYPSNNYPIYVEHGAIDHISTYIDQFDQSFILIDEHVNQYFADKFDDILSYENVHKVIIPAGEKTKTFEQYQETLEYILSHHVTRNTAIIAVGGGATGDFAGFIAATLLRGVHFIQVPTTILAHDSSVGGKVGINSKQGKNLIGAFYRPTAVIYDLVFLKTLPFEQILSGYAEVYKHALLNGESATQDIEQHFKDREILQSLNGMDKYIAKGIETKLDIVIADEKEQGVRKFLNLGHTFGHAVEYYHKIPHGHAVMVGIIYQFIVANALFDSKHDINHYIQYLIQLGYPLDMITDLDFETLYQYMLSDKKNDKQGVQMVLIRQFGDIVVQHVDQLTLQHACEQLKTYFK.

Residues 100–104 (GATGD), 124–125 (TT), lysine 136, lysine 145, and 163–166 (FLKT) contribute to the NAD(+) site. Residues glutamate 178, histidine 242, and histidine 256 each coordinate Zn(2+).

This sequence belongs to the sugar phosphate cyclases superfamily. Dehydroquinate synthase family. Requires Co(2+) as cofactor. Zn(2+) is required as a cofactor. It depends on NAD(+) as a cofactor.

It localises to the cytoplasm. It catalyses the reaction 7-phospho-2-dehydro-3-deoxy-D-arabino-heptonate = 3-dehydroquinate + phosphate. The protein operates within metabolic intermediate biosynthesis; chorismate biosynthesis; chorismate from D-erythrose 4-phosphate and phosphoenolpyruvate: step 2/7. Catalyzes the conversion of 3-deoxy-D-arabino-heptulosonate 7-phosphate (DAHP) to dehydroquinate (DHQ). The sequence is that of 3-dehydroquinate synthase from Staphylococcus aureus (strain NCTC 8325 / PS 47).